Consider the following 366-residue polypeptide: tRNA-specific 2-thiouridylase MnmA (366 aa).

ATP contacts are provided by residues 6–13 (AMSGGVDS) and Leu-32. The active-site Nucleophile is Cys-101. A disulfide bridge connects residues Cys-101 and Cys-198. Gly-125 lines the ATP pocket. The interaction with tRNA stretch occupies residues 148–150 (KDQ). The active-site Cysteine persulfide intermediate is the Cys-198.

It belongs to the MnmA/TRMU family.

Its subcellular location is the cytoplasm. It carries out the reaction S-sulfanyl-L-cysteinyl-[protein] + uridine(34) in tRNA + AH2 + ATP = 2-thiouridine(34) in tRNA + L-cysteinyl-[protein] + A + AMP + diphosphate + H(+). Functionally, catalyzes the 2-thiolation of uridine at the wobble position (U34) of tRNA, leading to the formation of s(2)U34. The sequence is that of tRNA-specific 2-thiouridylase MnmA from Nocardioides sp. (strain ATCC BAA-499 / JS614).